A 180-amino-acid polypeptide reads, in one-letter code: NADH-quinone oxidoreductase subunit I 1 (180 aa).

4Fe-4S ferredoxin-type domains follow at residues 50–80 (LSRDPDGEERCVACNLCAVACPVDCIALQKT) and 90–119 (EFFRINFSRCIFCGFCEEACPTYAIQLTPD). Residues cysteine 60, cysteine 63, cysteine 66, cysteine 70, cysteine 99, cysteine 102, cysteine 105, and cysteine 109 each coordinate [4Fe-4S] cluster.

It belongs to the complex I 23 kDa subunit family. NDH-1 is composed of 14 different subunits. Subunits NuoA, H, J, K, L, M, N constitute the membrane sector of the complex. [4Fe-4S] cluster is required as a cofactor.

It localises to the cell inner membrane. The catalysed reaction is a quinone + NADH + 5 H(+)(in) = a quinol + NAD(+) + 4 H(+)(out). Functionally, NDH-1 shuttles electrons from NADH, via FMN and iron-sulfur (Fe-S) centers, to quinones in the respiratory chain. The immediate electron acceptor for the enzyme in this species is believed to be ubiquinone. Couples the redox reaction to proton translocation (for every two electrons transferred, four hydrogen ions are translocated across the cytoplasmic membrane), and thus conserves the redox energy in a proton gradient. In Nitrosococcus oceani (strain ATCC 19707 / BCRC 17464 / JCM 30415 / NCIMB 11848 / C-107), this protein is NADH-quinone oxidoreductase subunit I 1.